A 353-amino-acid chain; its full sequence is Photosystem II protein D1 (353 aa).

Residue Thr2 is modified to N-acetylthreonine. Thr2 carries the post-translational modification Phosphothreonine. Helical transmembrane passes span 29-46 (YIGW…TATS), 118-133 (HFLL…EWEL), and 142-156 (WIAV…AATA). His118 serves as a coordination point for chlorophyll a. Tyr126 provides a ligand contact to pheophytin a. [CaMn4O5] cluster contacts are provided by Asp170 and Glu189. Residues 197–218 (FHMLGVAGVFGGSLFSAMHGSL) form a helical membrane-spanning segment. Residue His198 participates in chlorophyll a binding. Residues His215 and 264-265 (SF) each bind a quinone. Fe cation is bound at residue His215. His272 contributes to the Fe cation binding site. A helical transmembrane segment spans residues 274-288 (FLAAWPVVGIWFTAL). [CaMn4O5] cluster is bound by residues His332, Glu333, Asp342, and Ala344. Positions 345–353 (GVEVPSTNG) are excised as a propeptide.

Belongs to the reaction center PufL/M/PsbA/D family. PSII is composed of 1 copy each of membrane proteins PsbA, PsbB, PsbC, PsbD, PsbE, PsbF, PsbH, PsbI, PsbJ, PsbK, PsbL, PsbM, PsbT, PsbX, PsbY, PsbZ, Psb30/Ycf12, at least 3 peripheral proteins of the oxygen-evolving complex and a large number of cofactors. It forms dimeric complexes. It depends on The D1/D2 heterodimer binds P680, chlorophylls that are the primary electron donor of PSII, and subsequent electron acceptors. It shares a non-heme iron and each subunit binds pheophytin, quinone, additional chlorophylls, carotenoids and lipids. D1 provides most of the ligands for the Mn4-Ca-O5 cluster of the oxygen-evolving complex (OEC). There is also a Cl(-1) ion associated with D1 and D2, which is required for oxygen evolution. The PSII complex binds additional chlorophylls, carotenoids and specific lipids. as a cofactor. Post-translationally, tyr-161 forms a radical intermediate that is referred to as redox-active TyrZ, YZ or Y-Z. In terms of processing, C-terminally processed by CTPA; processing is essential to allow assembly of the oxygen-evolving complex and thus photosynthetic growth.

The protein resides in the plastid. It localises to the chloroplast thylakoid membrane. The enzyme catalyses 2 a plastoquinone + 4 hnu + 2 H2O = 2 a plastoquinol + O2. Its function is as follows. Photosystem II (PSII) is a light-driven water:plastoquinone oxidoreductase that uses light energy to abstract electrons from H(2)O, generating O(2) and a proton gradient subsequently used for ATP formation. It consists of a core antenna complex that captures photons, and an electron transfer chain that converts photonic excitation into a charge separation. The D1/D2 (PsbA/PsbD) reaction center heterodimer binds P680, the primary electron donor of PSII as well as several subsequent electron acceptors. The protein is Photosystem II protein D1 of Morus indica (Mulberry).